Reading from the N-terminus, the 808-residue chain is Receptor like protein 27 (808 aa).

Positions 1 to 31 are cleaved as a signal peptide; it reads MLFFIKVFMKTILSVLLLFFIFASSFTLVVG. The Extracellular segment spans residues 32 to 740; sequence LAGCRPDQIQ…DEDEEVLNWK (709 aa). Residues Asn-56, Asn-68, Asn-90, Asn-103, Asn-108, Asn-144, and Asn-167 are each glycosylated (N-linked (GlcNAc...) asparagine). LRR repeat units follow at residues 96 to 120, 122 to 144, 145 to 170, 172 to 192, 193 to 218, 220 to 241, 242 to 265, 266 to 291, 293 to 314, 315 to 338, 340 to 363, and 364 to 387; these read LQHL…GFGN, NRLE…SFSN, LSQL…NLTK, SILV…LLTL, PFLS…STSS, LEFM…ISKL, INLK…LFSS, FKSL…SKIP, NLEN…LKNL, TKLE…FWNL, RLRR…VLVN, and SSVR…PLSI. Asn-213 carries an N-linked (GlcNAc...) asparagine glycan. N-linked (GlcNAc...) asparagine glycosylation occurs at Asn-313. Residue Asn-363 is glycosylated (N-linked (GlcNAc...) asparagine). The stretch at 388 to 407 is one LRR 13; degenerate repeat; the sequence is NLLSAWNNSFTGNIPLETCN. Residues Asn-394, Asn-407, and Asn-420 are each glycosylated (N-linked (GlcNAc...) asparagine). 10 LRR repeats span residues 408 to 434, 436 to 456, 457 to 481, 483 to 504, 505 to 529, 532 to 556, 601 to 625, 626 to 649, 650 to 673, and 675 to 698; these read RSSL…DFQE, LIVV…IFSD, GALL…LLNC, MLRF…WLKA, LPDL…DRGP, FPKL…YFVN, LTSY…IGLL, KALI…LANV, TELE…LKTL, and FLAY…QITG. An N-linked (GlcNAc...) asparagine glycan is attached at Asn-480. Asn-544 is a glycosylation site (N-linked (GlcNAc...) asparagine). 2 N-linked (GlcNAc...) asparagine glycosylation sites follow: Asn-632 and Asn-648. Residues 741–761 traverse the membrane as a helical segment; it reads AVVIGYWPGLLLGLIMAHVIA. Residues 762-808 lie on the Cytoplasmic side of the membrane; that stretch reads SFKPKWLVKIVGPEKRKEDNPVRLFMTLDSRWDSFNNKKNVEQKSDM.

Belongs to the RLP family.

The protein localises to the cell membrane. The polypeptide is Receptor like protein 27 (Arabidopsis thaliana (Mouse-ear cress)).